The following is a 389-amino-acid chain: Mitochondrial carrier homolog 1 (389 aa).

The disordered stretch occupies residues 1 to 78 (MGASDPEVAP…PGAPGSGDNA (78 aa)). The Mitochondrial intermembrane segment spans residues 1-93 (MGASDPEVAP…LFVALGAGVT (93 aa)). Gly residues predominate over residues 15–33 (GAAGMAGAGAGAGARGGAP). Arg-29 carries the post-translational modification Omega-N-methylarginine. 2 Solcar repeats span residues 81–176 (TEAL…FPPD) and 192–280 (KKVV…INAY). Residues 94-104 (ALSHPLLYVKL) form a helical membrane-spanning segment. Residues 105–155 (LIQVGHEPMPPTLGTNVLGRKVLYLPSFFTYAKYIVQVDGKIGLFRGLSPR) lie on the Cytoplasmic side of the membrane. A helical transmembrane segment spans residues 156–176 (LMSNALSTVTRGSMKKVFPPD). At 177 to 209 (EMEQVSNKDDMKTSLKKVVKETSYEMMMQCVSR) the chain is on the mitochondrial intermembrane side. A helical transmembrane segment spans residues 210 to 229 (MLAHPLHVISMRCMVQFVGR). Topologically, residues 230-254 (EAKYSGVLSSIGKIFKEEGLLGFFV) are cytoplasmic. Residues 255–279 (GLIPHLLGDVVFLWGCNLLAHFINA) form a helical membrane-spanning segment. Topologically, residues 280–322 (YLVDDSVSDTPGGLGNDQNPGSQFSQALAIRSYTKFVMGIAVS) are mitochondrial intermembrane. A helical transmembrane segment spans residues 323–342 (MLTYPFLLVGDLMAVNNCGL). Topologically, residues 343–371 (RAGLPPYSPVFKSWIHCWKYLSVQGQLFR) are cytoplasmic. A helical transmembrane segment spans residues 372–389 (GSSLLFRRVSSGSCFALE).

Belongs to the mitochondrial carrier (TC 2.A.29) family. Interacts with PSEN1.

It localises to the mitochondrion outer membrane. Its function is as follows. Protein insertase that mediates insertion of transmembrane proteins into the mitochondrial outer membrane. Catalyzes insertion of proteins with alpha-helical transmembrane regions, such as signal-anchored, tail-anchored and multi-pass membrane proteins. Does not mediate insertion of beta-barrel transmembrane proteins. May play a role in apoptosis. This is Mitochondrial carrier homolog 1 (Mtch1) from Mus musculus (Mouse).